The following is a 230-amino-acid chain: MAQAVTSMAGLRGASQAVLEGSLQINGSNRLNISRVSVGSQRTGLVIRAQQNVSVPESSRRSVIGLVAAGLAGGSFVKAVFAEAIPIKVGGPPLPSGGLPGTDNSDQARDFSLALKDRFYIQPLSPTEAAARAKDSAKEIINVKSFIDKKAWPYVQNDLRLRASYLRYDLNTVISAKPKEEKQSLKDLTAKLFQTIDNLDYAARSKSSPDAEKYYSETVSSLNNVLAKLG.

A chloroplast-targeting transit peptide spans 1 to 49; that stretch reads MAQAVTSMAGLRGASQAVLEGSLQINGSNRLNISRVSVGSQRTGLVIRA. Residues 50-82 constitute a thylakoid transit peptide; the sequence is QQNVSVPESSRRSVIGLVAAGLAGGSFVKAVFA. S125 carries the phosphoserine modification. T195 is modified (phosphothreonine). Y215 bears the Phosphotyrosine mark. The residue at position 216 (S216) is a Phosphoserine. At T218 the chain carries Phosphothreonine.

This sequence belongs to the PsbQ family.

It is found in the plastid. Its subcellular location is the chloroplast thylakoid membrane. Its function is as follows. Required for photosystem II assembly/stability and photoautotrophic growth under low light conditions. In Arabidopsis thaliana (Mouse-ear cress), this protein is Oxygen-evolving enhancer protein 3-2, chloroplastic (PSBQ2).